The chain runs to 159 residues: Heavy metal-associated isoprenylated plant protein 28 (159 aa).

An HMA domain is found at 10–73; the sequence is LQTIEMRVHM…KVRKTGRRAE (64 aa). Cys-21 and Cys-24 together coordinate a metal cation. Cys-156 is modified (cysteine methyl ester). Cys-156 is lipidated: S-farnesyl cysteine. Residues 157-159 constitute a propeptide, removed in mature form; that stretch reads SIM.

Belongs to the HIPP family.

In terms of biological role, heavy-metal-binding protein. This Arabidopsis thaliana (Mouse-ear cress) protein is Heavy metal-associated isoprenylated plant protein 28.